We begin with the raw amino-acid sequence, 505 residues long: Aspartyl/glutamyl-tRNA(Asn/Gln) amidotransferase subunit B (505 aa).

Belongs to the GatB/GatE family. GatB subfamily. As to quaternary structure, heterotrimer of A, B and C subunits.

It carries out the reaction L-glutamyl-tRNA(Gln) + L-glutamine + ATP + H2O = L-glutaminyl-tRNA(Gln) + L-glutamate + ADP + phosphate + H(+). The catalysed reaction is L-aspartyl-tRNA(Asn) + L-glutamine + ATP + H2O = L-asparaginyl-tRNA(Asn) + L-glutamate + ADP + phosphate + 2 H(+). In terms of biological role, allows the formation of correctly charged Asn-tRNA(Asn) or Gln-tRNA(Gln) through the transamidation of misacylated Asp-tRNA(Asn) or Glu-tRNA(Gln) in organisms which lack either or both of asparaginyl-tRNA or glutaminyl-tRNA synthetases. The reaction takes place in the presence of glutamine and ATP through an activated phospho-Asp-tRNA(Asn) or phospho-Glu-tRNA(Gln). The chain is Aspartyl/glutamyl-tRNA(Asn/Gln) amidotransferase subunit B from Streptomyces avermitilis (strain ATCC 31267 / DSM 46492 / JCM 5070 / NBRC 14893 / NCIMB 12804 / NRRL 8165 / MA-4680).